Reading from the N-terminus, the 298-residue chain is Exosome complex component Rrp4 (298 aa).

The 69-residue stretch at 63–131 (GDVVIGKIKD…EVKKVKLGLK (69 aa)) folds into the S1 motif domain. The KH domain occupies 139–197 (RGGIIVDITPTKVPRLIGKKGSMINMIKDKTNCKIIVGQNGLVWVKGEEDMEQLTKDII). Positions 276 to 298 (KNKKDKPLSYGNNSGNSYILNNR) are disordered. Residues 285-298 (YGNNSGNSYILNNR) are compositionally biased toward polar residues.

The protein belongs to the RRP4 family. As to quaternary structure, component of the archaeal exosome complex. Forms a trimer of Rrp4 and/or Csl4 subunits. The trimer associates with a hexameric ring-like arrangement composed of 3 Rrp41-Rrp42 heterodimers.

The protein resides in the cytoplasm. Functionally, non-catalytic component of the exosome, which is a complex involved in RNA degradation. Increases the RNA binding and the efficiency of RNA degradation. Confers strong poly(A) specificity to the exosome. This chain is Exosome complex component Rrp4, found in Methanobrevibacter smithii (strain ATCC 35061 / DSM 861 / OCM 144 / PS).